The chain runs to 192 residues: Thymidine kinase (192 aa).

ATP is bound by residues 9–16 (ASMNAGKS) and 87–90 (DEAQ). Catalysis depends on E88, which acts as the Proton acceptor. 4 residues coordinate Zn(2+): C145, C147, C182, and H185.

Belongs to the thymidine kinase family. Homotetramer.

It localises to the cytoplasm. The enzyme catalyses thymidine + ATP = dTMP + ADP + H(+). The chain is Thymidine kinase from Novosphingobium aromaticivorans (strain ATCC 700278 / DSM 12444 / CCUG 56034 / CIP 105152 / NBRC 16084 / F199).